The sequence spans 95 residues: MATVEVEHVTSVAVEIVETEVNQHPEEVFVEDAEKTNEDEEEKAAVITETPTVVEEEKKAEEVTETPEEKKTEALEEKQTEVAAAEEVAVEKAKE.

Tandem repeats lie at residues 30–35 (VEDAEK), 39–43 (DEEEK), 54–59 (VEEEKK), 67–71 (PEEKK), 75–79 (LEEKQ), and 90–94 (VEKAK). Residues 30 to 94 (VEDAEKTNED…AEEVAVEKAK (65 aa)) are 6 X 5 AA approximate repeats of V-E-E-K-K. Residues 54–95 (VEEEKKAEEVTETPEEKKTEALEEKQTEVAAAEEVAVEKAKE) are disordered. Over residues 55 to 80 (EEEKKAEEVTETPEEKKTEALEEKQT) the composition is skewed to basic and acidic residues.

In terms of tissue distribution, low levels in roots (e.g. in cambium) and barely expressed in stems, shoots, flowers, siliques and leaves.

It localises to the cytoplasm. The protein resides in the cytosol. In terms of biological role, binds calcium Ca(2+) and may act as a signal mediator to buffer Ca(2+). In Arabidopsis thaliana (Mouse-ear cress), this protein is Cytosolic calcium-binding protein 3.